We begin with the raw amino-acid sequence, 83 residues long: Small ribosomal subunit protein eS21 (83 aa).

This sequence belongs to the eukaryotic ribosomal protein eS21 family. Component of the 40S small ribosomal subunit.

Its subcellular location is the cytoplasm. The protein resides in the cytosol. It is found in the rough endoplasmic reticulum. Functionally, component of the small ribosomal subunit. The ribosome is a large ribonucleoprotein complex responsible for the synthesis of proteins in the cell. This chain is Small ribosomal subunit protein eS21 (rps21), found in Ictalurus punctatus (Channel catfish).